A 155-amino-acid chain; its full sequence is Small ribosomal subunit protein uS7 (155 aa).

This sequence belongs to the universal ribosomal protein uS7 family. In terms of assembly, part of the 30S ribosomal subunit. Contacts proteins S9 and S11.

Functionally, one of the primary rRNA binding proteins, it binds directly to 16S rRNA where it nucleates assembly of the head domain of the 30S subunit. Is located at the subunit interface close to the decoding center, probably blocks exit of the E-site tRNA. The chain is Small ribosomal subunit protein uS7 from Chlorobium limicola (strain DSM 245 / NBRC 103803 / 6330).